We begin with the raw amino-acid sequence, 154 residues long: Myoglobin (154 aa).

The 147-residue stretch at 2–148 folds into the Globin domain; that stretch reads GLSDGEWQMV…FRNDIAAKYK (147 aa). Residues serine 4 and serine 32 each carry the phosphoserine modification. A nitrite-binding site is contributed by histidine 65. An O2-binding site is contributed by histidine 65. Threonine 68 is subject to Phosphothreonine. Histidine 94 is a binding site for heme b. Residues serine 121 and serine 133 each carry the phosphoserine modification.

The protein belongs to the globin family. As to quaternary structure, monomeric.

Its subcellular location is the cytoplasm. It is found in the sarcoplasm. It catalyses the reaction Fe(III)-heme b-[protein] + nitric oxide + H2O = Fe(II)-heme b-[protein] + nitrite + 2 H(+). It carries out the reaction H2O2 + AH2 = A + 2 H2O. Its function is as follows. Monomeric heme protein which primary function is to store oxygen and facilitate its diffusion within muscle tissues. Reversibly binds oxygen through a pentacoordinated heme iron and enables its timely and efficient release as needed during periods of heightened demand. Depending on the oxidative conditions of tissues and cells, and in addition to its ability to bind oxygen, it also has a nitrite reductase activity whereby it regulates the production of bioactive nitric oxide. Under stress conditions, like hypoxia and anoxia, it also protects cells against reactive oxygen species thanks to its pseudoperoxidase activity. This Rattus norvegicus (Rat) protein is Myoglobin.